A 233-amino-acid polypeptide reads, in one-letter code: 3-dehydroquinate dehydratase (233 aa).

3-dehydroquinate-binding positions include 34-36 (ELR) and R64. The active-site Proton donor/acceptor is the H118. The Schiff-base intermediate with substrate role is filled by K145. 3-dehydroquinate contacts are provided by R185, S205, and Q209.

The protein belongs to the type-I 3-dehydroquinase family. As to quaternary structure, homodimer.

It catalyses the reaction 3-dehydroquinate = 3-dehydroshikimate + H2O. The protein operates within metabolic intermediate biosynthesis; chorismate biosynthesis; chorismate from D-erythrose 4-phosphate and phosphoenolpyruvate: step 3/7. Its function is as follows. Involved in the third step of the chorismate pathway, which leads to the biosynthesis of aromatic amino acids. Catalyzes the cis-dehydration of 3-dehydroquinate (DHQ) and introduces the first double bond of the aromatic ring to yield 3-dehydroshikimate. In Coxiella burnetii (strain CbuK_Q154) (Coxiella burnetii (strain Q154)), this protein is 3-dehydroquinate dehydratase.